We begin with the raw amino-acid sequence, 341 residues long: uncharacterized protein (341 aa).

Helical transmembrane passes span Ala10–Thr30, Pro42–Phe62, Leu107–Thr127, Val129–Ile149, Phe155–Thr175, Ala192–Val212, Leu226–Leu246, Leu263–Ala283, Leu290–Leu310, and His313–Val333.

This sequence belongs to the TPT transporter family.

The protein localises to the vacuole membrane. It localises to the golgi apparatus membrane. This is an uncharacterized protein from Schizosaccharomyces pombe (strain 972 / ATCC 24843) (Fission yeast).